A 97-amino-acid chain; its full sequence is Class II hydrophobin NC2 (97 aa).

Residues 1–17 (MQFTIATVLSLLTITLA) form the signal peptide. Intrachain disulfides connect C31–C79, C40–C70, C41–C53, and C80–C91. N62 carries an N-linked (GlcNAc...) asparagine glycan.

Belongs to the cerato-ulmin hydrophobin family. Homotrimer. Further self-assembles to form highly ordered films at water-air interfaces through intermolecular interactions.

The protein resides in the secreted. It localises to the cell wall. In terms of biological role, aerial growth, conidiation, and dispersal of filamentous fungi in the environment rely upon a capability of their secreting small amphipathic proteins called hydrophobins (HPBs) with low sequence identity. Class I can self-assemble into an outermost layer of rodlet bundles on aerial cell surfaces, conferring cellular hydrophobicity that supports fungal growth, development and dispersal; whereas Class II form highly ordered films at water-air interfaces through intermolecular interactions but contribute nothing to the rodlet structure. NC2 is a class II hydrophobin that has the potential to adsorb to the hydrophobic interface at the hydrophobic-hydrophilic interface at very high rate but the predicted self-assembly NC2 film possesses a lower flexural rigidity than other class II hydrophobins such as HFBII from Hypocrea jecorina (also known as Trichoderma reesei). This is Class II hydrophobin NC2 from Neurospora crassa (strain ATCC 24698 / 74-OR23-1A / CBS 708.71 / DSM 1257 / FGSC 987).